The following is a 306-amino-acid chain: Methionyl-tRNA formyltransferase (306 aa).

109–112 contributes to the (6S)-5,6,7,8-tetrahydrofolate binding site; that stretch reads SILP.

This sequence belongs to the Fmt family.

It catalyses the reaction L-methionyl-tRNA(fMet) + (6R)-10-formyltetrahydrofolate = N-formyl-L-methionyl-tRNA(fMet) + (6S)-5,6,7,8-tetrahydrofolate + H(+). Functionally, attaches a formyl group to the free amino group of methionyl-tRNA(fMet). The formyl group appears to play a dual role in the initiator identity of N-formylmethionyl-tRNA by promoting its recognition by IF2 and preventing the misappropriation of this tRNA by the elongation apparatus. The chain is Methionyl-tRNA formyltransferase from Sphingopyxis alaskensis (strain DSM 13593 / LMG 18877 / RB2256) (Sphingomonas alaskensis).